The chain runs to 394 residues: Methane monooxygenase component A beta chain (394 aa).

As to quaternary structure, m.trichosporium has two forms of methane monooxygenase, a soluble and a membrane-bound type. The soluble type consists of four components (A to D): protein A, comprising three chains, in an alpha-2, beta-2, gamma-2 configuration, is a nonheme iron protein containing an unusual mu-hydroxo bridge structure at its active site and interacts with both oxygen and methane.

The catalysed reaction is methane + NADH + O2 + H(+) = methanol + NAD(+) + H2O. It catalyses the reaction methane + NADPH + O2 + H(+) = methanol + NADP(+) + H2O. Its function is as follows. Responsible for the initial oxygenation of methane to methanol in methanotrophs. It also catalyzes the monohydroxylation of a variety of unactivated alkenes, alicyclic, aromatic and heterocyclic compounds. The protein is Methane monooxygenase component A beta chain (mmoY) of Methylosinus trichosporium.